The sequence spans 192 residues: Thiol-disulfide oxidoreductase ResA (192 aa).

The helical; Signal-anchor for type II membrane protein transmembrane segment at Ser-22–Lys-41 threads the bilayer. Positions Tyr-47–Pro-189 constitute a Thioredoxin domain. Cys-89 and Cys-92 form a disulfide bridge.

Belongs to the thioredoxin family. ResA subfamily.

It localises to the cell membrane. It functions in the pathway protein modification; cytochrome c assembly. Its function is as follows. Thiol-disulfide oxidoreductase which is required in disulfide reduction during c-type cytochrome synthesis. May accept reducing equivalents from CcdA, leading to breakage of disulfide bonds in apocytochrome c; following this reduction heme can be covalently attached. This chain is Thiol-disulfide oxidoreductase ResA, found in Oceanobacillus iheyensis (strain DSM 14371 / CIP 107618 / JCM 11309 / KCTC 3954 / HTE831).